The sequence spans 284 residues: Undecaprenyl-diphosphatase (284 aa).

8 helical membrane passes run 7 to 27, 44 to 64, 90 to 110, 116 to 136, 167 to 187, 197 to 217, 229 to 249, and 259 to 279; these read IILG…TGHL, EMFD…LYFH, LWLK…PLND, FYHF…FIVI, VLSL…ALLV, FTFF…ILHF, FGVL…AIKF, and FTFF…YAMF.

The protein belongs to the UppP family.

The protein localises to the cell membrane. The enzyme catalyses di-trans,octa-cis-undecaprenyl diphosphate + H2O = di-trans,octa-cis-undecaprenyl phosphate + phosphate + H(+). Functionally, catalyzes the dephosphorylation of undecaprenyl diphosphate (UPP). Confers resistance to bacitracin. In Lactococcus lactis subsp. lactis (strain IL1403) (Streptococcus lactis), this protein is Undecaprenyl-diphosphatase.